A 32-amino-acid polypeptide reads, in one-letter code: MSDIN-like toxin proprotein 2 (32 aa).

The propeptide occupies 1 to 10 (MSDINATRLP). The segment at residues 11 to 17 (HLVRYPP) is a cross-link (cyclopeptide (His-Pro)). Positions 18–32 (YVGDGTDLTLNRGEK) are excised as a propeptide.

The protein belongs to the MSDIN fungal toxin family. Processed by the macrocyclase-peptidase enzyme POPB to yield a toxic cyclic heptapeptide. POPB first removes 10 residues from the N-terminus. Conformational trapping of the remaining peptide forces the enzyme to release this intermediate rather than proceed to macrocyclization. The enzyme rebinds the remaining peptide in a different conformation and catalyzes macrocyclization of the N-terminal 7 residues.

In terms of biological role, probable toxin that belongs to the MSDIN-like toxin family responsible for a large number of food poisoning cases and deaths. The polypeptide is MSDIN-like toxin proprotein 2 (Amanita fuligineoides).